The chain runs to 93 residues: Small ribosomal subunit protein bS20c (93 aa).

It belongs to the bacterial ribosomal protein bS20 family.

It localises to the plastid. The protein localises to the chloroplast. In terms of biological role, binds directly to 16S ribosomal RNA. The polypeptide is Small ribosomal subunit protein bS20c (Trieres chinensis (Marine centric diatom)).